A 180-amino-acid polypeptide reads, in one-letter code: MFHATTILAYKGKNKSVIGGDGQVSFGNTVLKGNAVKIRKIKDGKVLAGFAGSTADAFNLFDMFEENLEHAKGDLLKAVIEFSKAWRKDKYLRKLEAMMLVLNREKIFLLSGTGDVVEPEDGKIAAIGSGGNFALSAARALDKFADIDEEKLVKESLTIAGEICIYTNTNIKTYVIEDEK.

The active site involves T5. G161, C164, and T167 together coordinate Na(+).

This sequence belongs to the peptidase T1B family. HslV subfamily. A double ring-shaped homohexamer of HslV is capped on each side by a ring-shaped HslU homohexamer. The assembly of the HslU/HslV complex is dependent on binding of ATP.

It localises to the cytoplasm. It catalyses the reaction ATP-dependent cleavage of peptide bonds with broad specificity.. With respect to regulation, allosterically activated by HslU binding. Protease subunit of a proteasome-like degradation complex believed to be a general protein degrading machinery. This chain is ATP-dependent protease subunit HslV, found in Campylobacter curvus (strain 525.92).